We begin with the raw amino-acid sequence, 378 residues long: Probable pectin lyase A (378 aa).

Positions 1–18 (MKYQGLLAIAGCIASASA) are cleaved as a signal peptide. 2 disulfides stabilise this stretch: C81–C100 and C90–C224. N127 carries N-linked (GlcNAc...) asparagine glycosylation. R254 is an active-site residue. The cysteines at positions 321 and 329 are disulfide-linked.

Belongs to the polysaccharide lyase 1 family.

It localises to the secreted. It carries out the reaction Eliminative cleavage of (1-&gt;4)-alpha-D-galacturonan methyl ester to give oligosaccharides with 4-deoxy-6-O-methyl-alpha-D-galact-4-enuronosyl groups at their non-reducing ends.. Its function is as follows. Pectinolytic enzymes consist of four classes of enzymes: pectin lyase, polygalacturonase, pectin methylesterase and rhamnogalacturonase. Among pectinolytic enzymes, pectin lyase is the most important in depolymerization of pectin, since it cleaves internal glycosidic bonds of highly methylated pectins. The sequence is that of Probable pectin lyase A (pelA) from Neosartorya fischeri (strain ATCC 1020 / DSM 3700 / CBS 544.65 / FGSC A1164 / JCM 1740 / NRRL 181 / WB 181) (Aspergillus fischerianus).